The primary structure comprises 142 residues: Lysosomal enzyme trafficking factor (142 aa).

Transmembrane regions (helical) follow at residues 8–28 and 76–96; these read MGWI…YYIF and LLPF…VFLF.

This sequence belongs to the LYSET family.

The protein resides in the golgi apparatus membrane. Its function is as follows. Required for mannose-6-phosphate-dependent trafficking of lysosomal enzymes. LYSET bridges GlcNAc-1-phosphate transferase (GNPTAB), to the membrane-bound transcription factor site-1 protease (MBTPS1), thus allowing proteolytic activation of the GNPTAB. GNPTAB is involved in the regulation of M6P-dependent Golgi-to-lysosome trafficking of lysosomal enzymes. LYSET is thus an essential factor for maturation and delivery of lysosomal hydrolases. This is Lysosomal enzyme trafficking factor (tmem251) from Danio rerio (Zebrafish).